A 297-amino-acid chain; its full sequence is Cytidine deaminase (297 aa).

2 consecutive CMP/dCMP-type deaminase domains span residues 54-174 and 192-297; these read SSVE…FGPK and LRGD…YIEV. 95-97 provides a ligand contact to substrate; the sequence is NQE. His108 is a Zn(2+) binding site. The active-site Proton donor is Glu110. Residues Cys135 and Cys138 each coordinate Zn(2+).

This sequence belongs to the cytidine and deoxycytidylate deaminase family. Homodimer. Zn(2+) is required as a cofactor.

The catalysed reaction is cytidine + H2O + H(+) = uridine + NH4(+). It catalyses the reaction 2'-deoxycytidine + H2O + H(+) = 2'-deoxyuridine + NH4(+). Functionally, this enzyme scavenges exogenous and endogenous cytidine and 2'-deoxycytidine for UMP synthesis. The polypeptide is Cytidine deaminase (Actinobacillus pleuropneumoniae serotype 5b (strain L20)).